A 207-amino-acid chain; its full sequence is Tetrathionate reductase subunit B (207 aa).

The first 28 residues, 1-28, serve as a signal peptide directing secretion; sequence MLISKTLIFYQVVNIVSQKGSGKRRWKM. 3 4Fe-4S ferredoxin-type domains span residues 34–63, 75–106, and 107–136; these read YVYVVDVSKCYGCLSCVAACAAENNVPVGY, GRVAFVPKICNHCDNPSCVHACPVNATYKTEE, and GLVLIDDEICIGCGACIQACPYGARFRNPV. Positions 43, 46, 49, 53, 84, 87, 92, 96, 116, 119, 122, 126, 143, 146, 157, and 161 each coordinate [4Fe-4S] cluster.

In terms of assembly, probably composed of three subunits: TtrA, TtrB and TtrC.

The protein resides in the cell membrane. Functionally, part of a membrane-bound tetrathionate reductase that catalyzes the reduction of tetrathionate to thiosulfate. TtrB is probably involved in transfer of electrons from TtrC to TtrA. The sequence is that of Tetrathionate reductase subunit B (ttrB) from Archaeoglobus fulgidus (strain ATCC 49558 / DSM 4304 / JCM 9628 / NBRC 100126 / VC-16).